Consider the following 572-residue polypeptide: Potassium-transporting ATPase potassium-binding subunit (572 aa).

The next 10 membrane-spanning stretches (helical) occupy residues 6–26 (ILFV…GTYI), 66–86 (FFSL…VLLL), 135–155 (ALAV…IVLI), 177–197 (IFWI…FQGV), 251–271 (TIIT…ALTY), 283–303 (GWMI…VMTI), 382–402 (IFGG…LAVF), 428–448 (MFAL…AAVI), 493–513 (ITIA…VMML), and 537–557 (FIFS…TIFP).

The protein belongs to the KdpA family. As to quaternary structure, the system is composed of three essential subunits: KdpA, KdpB and KdpC.

Its subcellular location is the cell inner membrane. Its function is as follows. Part of the high-affinity ATP-driven potassium transport (or Kdp) system, which catalyzes the hydrolysis of ATP coupled with the electrogenic transport of potassium into the cytoplasm. This subunit binds the periplasmic potassium ions and delivers the ions to the membrane domain of KdpB through an intramembrane tunnel. The protein is Potassium-transporting ATPase potassium-binding subunit of Francisella philomiragia subsp. philomiragia (strain ATCC 25017 / CCUG 19701 / FSC 153 / O#319-036).